Here is a 435-residue protein sequence, read N- to C-terminus: Adenylosuccinate synthetase (435 aa).

GTP contacts are provided by residues 11 to 17 and 39 to 41; these read GDEGKGK and GHT. The Proton acceptor role is filled by D12. Mg(2+) is bound by residues D12 and G39. Residues 12-15, 37-40, T128, R142, Q223, T238, and R302 contribute to the IMP site; these read DEGK and NAGH. H40 acts as the Proton donor in catalysis. Position 298–304 (298–304) interacts with substrate; the sequence is SVTGRPR. Residues R304, 330 to 332, and 412 to 414 each bind GTP; these read KLD and STG.

The protein belongs to the adenylosuccinate synthetase family. As to quaternary structure, homodimer. It depends on Mg(2+) as a cofactor.

It localises to the cytoplasm. The catalysed reaction is IMP + L-aspartate + GTP = N(6)-(1,2-dicarboxyethyl)-AMP + GDP + phosphate + 2 H(+). The protein operates within purine metabolism; AMP biosynthesis via de novo pathway; AMP from IMP: step 1/2. In terms of biological role, plays an important role in the de novo pathway of purine nucleotide biosynthesis. Catalyzes the first committed step in the biosynthesis of AMP from IMP. This is Adenylosuccinate synthetase from Coxiella burnetii (strain CbuK_Q154) (Coxiella burnetii (strain Q154)).